The chain runs to 156 residues: Small ribosomal subunit protein uS7 (156 aa).

Belongs to the universal ribosomal protein uS7 family. In terms of assembly, part of the 30S ribosomal subunit. Contacts proteins S9 and S11.

One of the primary rRNA binding proteins, it binds directly to 16S rRNA where it nucleates assembly of the head domain of the 30S subunit. Is located at the subunit interface close to the decoding center, probably blocks exit of the E-site tRNA. This is Small ribosomal subunit protein uS7 from Shewanella baltica (strain OS223).